The primary structure comprises 275 residues: 2-dehydro-3-deoxyphosphooctonate aldolase (275 aa).

This sequence belongs to the KdsA family.

The protein resides in the cytoplasm. It catalyses the reaction D-arabinose 5-phosphate + phosphoenolpyruvate + H2O = 3-deoxy-alpha-D-manno-2-octulosonate-8-phosphate + phosphate. Its pathway is carbohydrate biosynthesis; 3-deoxy-D-manno-octulosonate biosynthesis; 3-deoxy-D-manno-octulosonate from D-ribulose 5-phosphate: step 2/3. The protein operates within bacterial outer membrane biogenesis; lipopolysaccharide biosynthesis. This is 2-dehydro-3-deoxyphosphooctonate aldolase from Francisella tularensis subsp. holarctica (strain LVS).